We begin with the raw amino-acid sequence, 350 residues long: Protein pelota homolog (350 aa).

It belongs to the eukaryotic release factor 1 family. Pelota subfamily. As to quaternary structure, monomer. The cofactor is a divalent metal cation.

It is found in the cytoplasm. In terms of biological role, may function in recognizing stalled ribosomes, interact with stem-loop structures in stalled mRNA molecules, and effect endonucleolytic cleavage of the mRNA. May play a role in the release non-functional ribosomes and degradation of damaged mRNAs. Has endoribonuclease activity. The chain is Protein pelota homolog from Methanosarcina barkeri (strain Fusaro / DSM 804).